The sequence spans 388 residues: Putative nickel insertion protein (388 aa).

Belongs to the LarC family.

In Syntrophobacter fumaroxidans (strain DSM 10017 / MPOB), this protein is Putative nickel insertion protein.